The following is a 222-amino-acid chain: UPF0758 protein YicR (222 aa).

The 123-residue stretch at 100–222 (PLLSPEMTRE…YVSFAERGWI (123 aa)) folds into the MPN domain. Zn(2+) is bound by residues H171, H173, and D184. Positions 171–184 (HNHPSGCAEPSKAD) match the JAMM motif motif.

It belongs to the UPF0758 family. YicR subfamily.

This chain is UPF0758 protein YicR, found in Shigella dysenteriae serotype 1 (strain Sd197).